A 2167-amino-acid chain; its full sequence is SH3 and multiple ankyrin repeat domains protein 1 (2167 aa).

Positions 1–63 (MTHSPATSED…TRGLQGRSMS (63 aa)) are disordered. Low complexity predominate over residues 17–32 (SECPEGGSESDSSPDG). A compositionally biased stretch (gly residues) spans 33-47 (PGRGPQGTRGRGSGA). Position 43 is an omega-N-methylarginine (Arg43). Tyr186 bears the Phosphotyrosine mark. 6 ANK repeats span residues 212-242 (SGET…HIDF), 246-275 (DGMT…SPNY), 279-309 (RGLT…QLGI), 313-342 (NGWQ…EPGA), 346-375 (SGNT…NKDV), and 379-407 (NGQT…EQDV). Disordered stretches follow at residues 413-432 (SPKY…TVPP) and 454-546 (PGAS…SRGR). The span at 454-479 (PGASSSGTPGPTSGSQGQSQPSAPST) shows a compositional bias: low complexity. The span at 527–542 (PAGGTGGSGGPGGSLG) shows a compositional bias: gly residues. Ser540 carries the phosphoserine modification. Arg544 bears the Omega-N-methylarginine mark. One can recognise an SH3 domain in the interval 554–613 (VPGRSFMAVKSYQAQGEGEISLSKGEKIKVLSIGEGGFWEGQVKGRVGWFPSDCLEEVAN). In terms of domain architecture, PDZ spans 663–757 (TVLLQKKDSE…TLMVKVVMVT (95 aa)). Ser671 and Ser791 each carry phosphoserine. Residues 841–894 (ISASESPGPGGLASLGKHRPKGFFATESSFDPHHRSQPSYDRPSFLPPGPGLML) are disordered. Ser898 carries the phosphoserine modification. Disordered regions lie at residues 917–1233 (SRSL…LDFT) and 1245–1290 (RREG…RHSK). A compositionally biased stretch (pro residues) spans 928 to 947 (IPPPPTTSPPEPPYSTPPAP). Arg958 carries the omega-N-methylarginine modification. The span at 969–980 (PLPASSPSSFDG) shows a compositional bias: low complexity. Residues 1004–1028 (AHHHPPHHHHHHAPPPQPHHHHAHP) show a composition bias toward basic residues. Arg1059 carries the post-translational modification Omega-N-methylarginine. The span at 1064–1089 (SPTSGAPSPSHHSSSGGSSGPAQAPA) shows a compositional bias: low complexity. 2 positions are modified to omega-N-methylarginine: Arg1098 and Arg1109. Composition is skewed to low complexity over residues 1132–1146 (SLPP…ALPR) and 1171–1184 (STSS…GSST). Positions 1203-1224 (SPAPATSPVPPSPSPVPTPASP) are enriched in pro residues. Positions 1245–1256 (RREGGWQNEARR) are enriched in basic and acidic residues. An Asymmetric dimethylarginine modification is found at Arg1257. The residue at position 1291 (Ser1291) is a Phosphoserine. Disordered stretches follow at residues 1308–1331 (GGSS…GSSS), 1361–1417 (LAAR…VLRL), 1429–1458 (RAGL…PPTA), 1500–1725 (FLEN…AGVA), 1740–1790 (GQAF…TPTS), 1828–1866 (VPPV…QPQA), 1898–1988 (PWAR…STRH), and 2002–2029 (RRAP…LPIL). Residues 1363 to 1372 (ARERALKESS) are compositionally biased toward basic and acidic residues. Residues 1378–1395 (PQPPPRPPSPRYDAPPPT) show a composition bias toward pro residues. Over residues 1396 to 1408 (LHHHSPHSPHSPH) the composition is skewed to basic residues. Omega-N-methylarginine is present on Arg1429. Ser1442 bears the Phosphoserine mark. Low complexity predominate over residues 1530 to 1541 (RRVLPTSPTSPR). Over residues 1589 to 1615 (PLTPGPPHPLPDPPSPATPLPAAPPPA) the composition is skewed to pro residues. Over residues 1624–1641 (DSTASSLTSYDSEVATLT) the composition is skewed to polar residues. Over residues 1648–1676 (PGDPPAPGPPAPAAPAPPAPQPGPDPPPG) the composition is skewed to pro residues. The span at 1684–1694 (VDSRSSSDHPL) shows a compositional bias: basic and acidic residues. Positions 1695 to 1708 (ETISSASTLSSLSA) are enriched in low complexity. Residues 1709-1724 (EGGGNTGGVAGGGAGV) are compositionally biased toward gly residues. A compositionally biased stretch (pro residues) spans 1850–1861 (PGPPPPPLPGPL). An Omega-N-methylarginine modification is found at Arg1901. 3 stretches are compositionally biased toward low complexity: residues 1934-1945 (SQTSLLSKPSSS), 1960-1985 (TGSG…ASAS), and 2002-2012 (RRAPSPSLLPA). Omega-N-methylarginine is present on residues Arg2022, Arg2042, and Arg2080. An SAM domain is found at 2104 to 2167 (WTKFDVADWL…DRALKFFLER (64 aa)).

This sequence belongs to the SHANK family. May homomultimerize via its SAM domain. Interacts with the C-terminus of SSTR2 via the PDZ domain. Interacts with SHARPIN, SPTAN1, HOMER1 and DLGAP1/GKAP. Part of a complex with DLG4/PSD-95 and DLGAP1/GKAP. Interacts with BAIAP2. Interacts with IGSF9. Interacts with HOMER1 and HOMER3. As to expression, in brain, highly expressed in cortex, hippocampus and cerebellum.

It localises to the cytoplasm. The protein resides in the synapse. Its subcellular location is the postsynaptic density. Its function is as follows. Seems to be an adapter protein in the postsynaptic density (PSD) of excitatory synapses that interconnects receptors of the postsynaptic membrane including NMDA-type and metabotropic glutamate receptors, and the actin-based cytoskeleton. Plays a role in the structural and functional organization of the dendritic spine and synaptic junction. Overexpression promotes maturation of dendritic spines and the enlargement of spine heads via its ability to recruit Homer to postsynaptic sites, and enhances presynaptic function. This chain is SH3 and multiple ankyrin repeat domains protein 1 (Shank1), found in Mus musculus (Mouse).